Here is a 119-residue protein sequence, read N- to C-terminus: UPF0342 protein GTNG_0551 (119 aa).

It belongs to the UPF0342 family.

The protein is UPF0342 protein GTNG_0551 of Geobacillus thermodenitrificans (strain NG80-2).